Reading from the N-terminus, the 189-residue chain is Elongation factor P (189 aa).

This sequence belongs to the elongation factor P family.

Its subcellular location is the cytoplasm. The protein operates within protein biosynthesis; polypeptide chain elongation. Involved in peptide bond synthesis. Stimulates efficient translation and peptide-bond synthesis on native or reconstituted 70S ribosomes in vitro. Probably functions indirectly by altering the affinity of the ribosome for aminoacyl-tRNA, thus increasing their reactivity as acceptors for peptidyl transferase. This chain is Elongation factor P, found in Orientia tsutsugamushi (strain Boryong) (Rickettsia tsutsugamushi).